The primary structure comprises 472 residues: Relaxin-3 receptor 1 (472 aa).

At 1–81 (MQVASATPAA…ESTDTEARVR (81 aa)) the chain is on the extracellular side. N-linked (GlcNAc...) asparagine glycans are attached at residues asparagine 36 and asparagine 40. A helical membrane pass occupies residues 82–102 (ILISAVYWVVCALGLAGNLLV). Residues 103–119 (LYLMKSKQGWRKSSINL) are Cytoplasmic-facing. Residues 120 to 140 (FVTNLALTDFQFVLTLPFWAV) traverse the membrane as a helical segment. The Extracellular portion of the chain corresponds to 141 to 156 (ENALDFKWPFGKAMCK). Cysteine 155 and cysteine 247 form a disulfide bridge. Residues 157–177 (IVSMVTSMNMYASVFFLTAMS) form a helical membrane-spanning segment. At 178 to 215 (VARYHSVASALKSHRTRGRGRGDCCGQSLRESCCFSAK) the chain is on the cytoplasmic side. The chain crosses the membrane as a helical span at residues 216–236 (VLCGLIWASAALASLPNAIFS). At 237–270 (TTIRVLGEELCLMHFPDKLLGWDRQFWLGLYHLQ) the chain is on the extracellular side. Residues 271–291 (KVLLGFLLPLSIISLCYLLLV) traverse the membrane as a helical segment. The Cytoplasmic portion of the chain corresponds to 292 to 298 (RFISDRR). Residues 299–319 (VVGTTDAVGAAAAPGGGLSTA) traverse the membrane as a helical segment. The Extracellular portion of the chain corresponds to 320–332 (SARRRSKVTKSVT). Residues 333–353 (IVVLSFFLCWLPNQALTTWSI) form a helical membrane-spanning segment. The Cytoplasmic segment spans residues 354 to 472 (LIKFNAVPFS…YDLLPSSSAY (119 aa)).

The protein belongs to the G-protein coupled receptor 1 family.

It localises to the cell membrane. Receptor for RNL3/relaxin-3. Binding of the ligand inhibit cAMP accumulation. The protein is Relaxin-3 receptor 1 (Rxfp3) of Mus musculus (Mouse).